A 539-amino-acid polypeptide reads, in one-letter code: Probable malate:quinone oxidoreductase 3 (539 aa).

The tract at residues Leu-516 to Arg-539 is disordered.

The protein belongs to the MQO family. The cofactor is FAD.

The enzyme catalyses (S)-malate + a quinone = a quinol + oxaloacetate. The protein operates within carbohydrate metabolism; tricarboxylic acid cycle; oxaloacetate from (S)-malate (quinone route): step 1/1. The protein is Probable malate:quinone oxidoreductase 3 of Pseudomonas putida (strain ATCC 47054 / DSM 6125 / CFBP 8728 / NCIMB 11950 / KT2440).